The following is a 465-amino-acid chain: Nucleolar and spindle-associated protein 1 (465 aa).

The stretch at 32 to 61 (ADKLLRALKAHLKNEARKENENQDEIQTSA) forms a coiled coil. 3 disordered regions span residues 44–123 (KNEA…QNHS), 148–207 (VEVP…TPNF), and 252–294 (GVPA…GSAK). Residues 56–75 (EIQTSASSCDEPEIQTSSQE) are compositionally biased toward polar residues. Positions 76–86 (QAEREPDDHVT) are enriched in basic and acidic residues. Basic residues predominate over residues 87 to 96 (KTRGRRKTVH). Serine 152 carries the phosphoserine modification. Positions 154 to 166 (PNESQGDENTVSS) are enriched in polar residues. The span at 169–179 (HGIDGNEDPRV) shows a compositional bias: basic and acidic residues. Residue threonine 204 is modified to Phosphothreonine. The segment at 262–405 (GRLSVACTPG…HKGKLKPWGQ (144 aa)) is interaction with microtubules. Serine 265 carries the phosphoserine modification. Position 269 is a phosphothreonine (threonine 269). A phosphoserine mark is found at serine 272, serine 292, serine 299, and serine 334. Residues 308–338 (SAATKDNEHKRSLTKTPARKSPHVTTSVNTP) are disordered. Residues threonine 337, threonine 361, and threonine 372 each carry the phosphothreonine modification. Serine 375 and serine 386 each carry phosphoserine. The tract at residues 396-454 (HKGKLKPWGQSKENNSLHEHVNRVSFHKKTYKQPRLQTREEQRKKHERERKEKKEKVLG) is disordered. The KEN box motif lies at 407-413 (KENNSLH). The stretch at 430 to 457 (RLQTREEQRKKHERERKEKKEKVLGVRR) forms a coiled coil. Residues 432-453 (QTREEQRKKHERERKEKKEKVL) show a composition bias toward basic and acidic residues.

It belongs to the NUSAP family. As to quaternary structure, interacts with DNA and microtubules. Microtubule bundling is inhibited by IPO7, KPNA2 and KPNB1 while association with DNA is also inhibited by IPO7 and KPNA2. Ubiquitinated. Ubiquitination by FZR1 may lead to proteasome-dependent degradation of this protein.

It localises to the cytoplasm. The protein localises to the nucleus. The protein resides in the nucleolus. Its subcellular location is the cytoskeleton. It is found in the spindle. It localises to the chromosome. Its function is as follows. Microtubule-associated protein with the capacity to bundle and stabilize microtubules. May associate with chromosomes and promote the organization of mitotic spindle microtubules around them. The sequence is that of Nucleolar and spindle-associated protein 1 (NUSAP1) from Bos taurus (Bovine).